A 567-amino-acid polypeptide reads, in one-letter code: DNA ligase B (567 aa).

The active-site N6-AMP-lysine intermediate is the Lys-132.

It belongs to the NAD-dependent DNA ligase family. LigB subfamily.

The catalysed reaction is NAD(+) + (deoxyribonucleotide)n-3'-hydroxyl + 5'-phospho-(deoxyribonucleotide)m = (deoxyribonucleotide)n+m + AMP + beta-nicotinamide D-nucleotide.. Its function is as follows. Catalyzes the formation of phosphodiester linkages between 5'-phosphoryl and 3'-hydroxyl groups in double-stranded DNA using NAD as a coenzyme and as the energy source for the reaction. The sequence is that of DNA ligase B from Yersinia pseudotuberculosis serotype O:1b (strain IP 31758).